We begin with the raw amino-acid sequence, 967 residues long: RNA polymerase-associated protein RapA (967 aa).

Residues 163-333 (EVGQRHAPRV…FARLRLLDPN (171 aa)) form the Helicase ATP-binding domain. Residue 176 to 183 (DEVGLGKT) participates in ATP binding. The DEAH box motif lies at 279 to 282 (DEAH). Positions 489 to 643 (RVEWLLNYLT…TCPTGRTIYD (155 aa)) constitute a Helicase C-terminal domain.

This sequence belongs to the SNF2/RAD54 helicase family. RapA subfamily. As to quaternary structure, interacts with the RNAP. Has a higher affinity for the core RNAP than for the holoenzyme. Its ATPase activity is stimulated by binding to RNAP.

Its function is as follows. Transcription regulator that activates transcription by stimulating RNA polymerase (RNAP) recycling in case of stress conditions such as supercoiled DNA or high salt concentrations. Probably acts by releasing the RNAP, when it is trapped or immobilized on tightly supercoiled DNA. Does not activate transcription on linear DNA. Probably not involved in DNA repair. In Pectobacterium carotovorum subsp. carotovorum (strain PC1), this protein is RNA polymerase-associated protein RapA.